Consider the following 59-residue polypeptide: Putative movement protein p6.6 (59 aa).

The helical transmembrane segment at 13-35 (RVGPLLVLCLLLLLILFSRSWNV) threads the bilayer.

It is found in the membrane. Functionally, cell-to-cell movement. This chain is Putative movement protein p6.6, found in Panicum mosaic virus (strain United States/Kansas 109S) (PMV).